The sequence spans 631 residues: tRNA uridine 5-carboxymethylaminomethyl modification enzyme MnmG (631 aa).

14–19 (GGGHAG) contacts FAD. 274-288 (GPRYCPSIEDKIHRF) contacts NAD(+).

It belongs to the MnmG family. Homodimer. Heterotetramer of two MnmE and two MnmG subunits. It depends on FAD as a cofactor.

It localises to the cytoplasm. Functionally, NAD-binding protein involved in the addition of a carboxymethylaminomethyl (cmnm) group at the wobble position (U34) of certain tRNAs, forming tRNA-cmnm(5)s(2)U34. This chain is tRNA uridine 5-carboxymethylaminomethyl modification enzyme MnmG, found in Pseudomonas paraeruginosa (strain DSM 24068 / PA7) (Pseudomonas aeruginosa (strain PA7)).